A 498-amino-acid polypeptide reads, in one-letter code: MNTNRGRYPPGVGTGRGAPPNPDYHQSYRQQQPPQDQQYVQRGYSQNPQQMQLQQQHQQQQQQQQWSRRPQLPGNASNANEVVQQTTQPEASSDANGQDWKATLRLPPPDTRYQTADVTATKGNEFEDYFLKRDLLKGIYEKGFEKPSPIQEESIPIALTGSDILARAKNGTGKTGAFCIPVLEKIDPNNNVIQAMILVPTRELALQTSQVCKELSKYLNIQVMVTTGGTSLRDDIMRLHQPVHLLVGTPGRILDLTKKGVCVLKDCAMLVMDEADKLLSAEFQPSLEELIQFLPQNRQFLMFSATFPVTVKAFKDRHLRKPYVINLMDQLTLMGVTQYYAFVEERQKVHCLNTLFSKLQINQSIIFCNSVNRVELLAKKITELGYSCFYIHAKMVQDHRNRVFHEFRNGACRNLVCTDLFTRGIDIQAVNVVINFDFPRTSESYLHRVGRSGRFGHLGLAVNLVTYEDRFKMYQTEQELGTEIKPIPSNIDQAIYCQ.

The segment at 1–114 is disordered; that stretch reads MNTNRGRYPP…RLPPPDTRYQ (114 aa). The segment covering 27-65 has biased composition (low complexity); the sequence is SYRQQQPPQDQQYVQRGYSQNPQQMQLQQQHQQQQQQQQ. Polar residues predominate over residues 74–96; it reads GNASNANEVVQQTTQPEASSDAN. A Q motif motif is present at residues 124–152; the sequence is NEFEDYFLKRDLLKGIYEKGFEKPSPIQE. Residues 155–325 form the Helicase ATP-binding domain; that stretch reads IPIALTGSDI…DRHLRKPYVI (171 aa). An ATP-binding site is contributed by 168–175; that stretch reads AKNGTGKT. Threonine 230 bears the Phosphothreonine mark. The DEAD box motif lies at 273–276; the sequence is DEAD. The 161-residue stretch at 335–495 folds into the Helicase C-terminal domain; that stretch reads GVTQYYAFVE…PIPSNIDQAI (161 aa).

It belongs to the DEAD box helicase family. DDX6/DHH1 subfamily.

The protein resides in the cytoplasm. It is found in the P-body. The catalysed reaction is ATP + H2O = ADP + phosphate + H(+). Its function is as follows. ATP-dependent RNA helicase involved in mRNA turnover, and more specifically in mRNA decapping. The protein is DEAD-box ATP-dependent RNA helicase 12 (RH12) of Arabidopsis thaliana (Mouse-ear cress).